The chain runs to 152 residues: Protein-export protein SecB (152 aa).

This sequence belongs to the SecB family. As to quaternary structure, homotetramer, a dimer of dimers. One homotetramer interacts with 1 SecA dimer.

It is found in the cytoplasm. One of the proteins required for the normal export of preproteins out of the cell cytoplasm. It is a molecular chaperone that binds to a subset of precursor proteins, maintaining them in a translocation-competent state. It also specifically binds to its receptor SecA. In Rickettsia peacockii (strain Rustic), this protein is Protein-export protein SecB.